The chain runs to 905 residues: Chitin synthase 3B (905 aa).

Residues 1–10 are compositionally biased toward basic and acidic residues; sequence MAYNGRDQEY. The interval 1-136 is disordered; sequence MAYNGRDQEY…GGGGGLGRSK (136 aa). Residues 81–93 are compositionally biased toward gly residues; the sequence is GPTGYGDTGGSFG. N536 carries N-linked (GlcNAc...) asparagine glycosylation. The helical transmembrane segment at 562-584 threads the bilayer; it reads MFFLHIQLIYTTLNTMFAWFSLG. N-linked (GlcNAc...) asparagine glycosylation occurs at N601. Transmembrane regions (helical) follow at residues 618-638, 653-673, 705-725, 733-753, 832-852, and 873-893; these read IVNA…FILA, SFMV…YLVV, VILV…FMYL, SFPY…VYAF, TGLV…ITST, and FLLY…LWFL.

This sequence belongs to the chitin synthase family. Class III subfamily.

The protein localises to the cell membrane. It catalyses the reaction [(1-&gt;4)-N-acetyl-beta-D-glucosaminyl](n) + UDP-N-acetyl-alpha-D-glucosamine = [(1-&gt;4)-N-acetyl-beta-D-glucosaminyl](n+1) + UDP + H(+). Polymerizes chitin, a structural polymer of the cell wall and septum, by transferring the sugar moiety of UDP-GlcNAc to the non-reducing end of the growing chitin polymer. Plays essential functions in fungal survival and host infection. This Gibberella zeae (strain ATCC MYA-4620 / CBS 123657 / FGSC 9075 / NRRL 31084 / PH-1) (Wheat head blight fungus) protein is Chitin synthase 3B.